The chain runs to 403 residues: Leu/Ile/Val-binding protein homolog 8 (403 aa).

A signal peptide spans 1 to 26 (MRLSRLLIGASLGVALSSTAFTAALA).

This sequence belongs to the leucine-binding protein family.

Functionally, component of an amino-acid transport system. The protein is Leu/Ile/Val-binding protein homolog 8 of Brucella suis biovar 1 (strain 1330).